We begin with the raw amino-acid sequence, 541 residues long: Catalase (541 aa).

The disordered stretch occupies residues 1–20; that stretch reads MPQTKGKPHEEQLEQYKNSQ. Catalysis depends on residues H74 and N147. A heme-binding site is contributed by Y357.

Belongs to the catalase family. The cofactor is heme.

Its subcellular location is the peroxisome matrix. The enzyme catalyses 2 H2O2 = O2 + 2 H2O. Functionally, catalyzes the degradation of hydrogen peroxide (H(2)O(2)) generated by peroxisomal oxidases to water and oxygen, thereby protecting cells from the toxic effects of hydrogen peroxide. The polypeptide is Catalase (CAT) (Ascaris suum (Pig roundworm)).